The primary structure comprises 513 residues: MQLNPSEISELIKSRIQGLEASADVRNQGTVISVTDGIVRIHGLSDVMQGEMLEFPGNTFGLALNLERDSVGAVILGEYEHISEGDIVKTTGRILEVPVGPELVGRVVDALGNPIDGKGPVNAKLTDAIEKIAPGVIWRKSVSQPVQTGIKSIDAMVPIGRGQRELIIGDRQCGKTAVALDAIINQKGKDLICIYVAIGQKASSIMNVVRKLEETGAMEYTIVVAASASDSAAMQYLAPYAGCTMGEYFRDRGQDALIIYDDLTKQAWAYRQISLLLRRPPGREAYPGDVFYLHSRLLERAARVSEEYVEKFTNGEVKGKSGSLTALPVIETQAGDVTAFVPTNVISITDGQIFLETDLFNAGIRPAINAGVSVSRVGGAAQTKVVKKLSGGIRTDLAQYRELAAFAQFASDLDEATRKQLERGRRVTELLKQPQYQPLQVWELAVSLYAANNGYLDDLDVKQVLSFEKGLRDNLKTSHADLIKRIEDTKDLSKDDEGALRSAIEAFKKSGAY.

ATP is bound at residue 169-176; that stretch reads GDRQCGKT.

The protein belongs to the ATPase alpha/beta chains family. As to quaternary structure, F-type ATPases have 2 components, CF(1) - the catalytic core - and CF(0) - the membrane proton channel. CF(1) has five subunits: alpha(3), beta(3), gamma(1), delta(1), epsilon(1). CF(0) has three main subunits: a(1), b(2) and c(9-12). The alpha and beta chains form an alternating ring which encloses part of the gamma chain. CF(1) is attached to CF(0) by a central stalk formed by the gamma and epsilon chains, while a peripheral stalk is formed by the delta and b chains.

It localises to the cell inner membrane. It catalyses the reaction ATP + H2O + 4 H(+)(in) = ADP + phosphate + 5 H(+)(out). Produces ATP from ADP in the presence of a proton gradient across the membrane. The alpha chain is a regulatory subunit. In Burkholderia cenocepacia (strain ATCC BAA-245 / DSM 16553 / LMG 16656 / NCTC 13227 / J2315 / CF5610) (Burkholderia cepacia (strain J2315)), this protein is ATP synthase subunit alpha.